The chain runs to 715 residues: Lactococcin-A transport/processing ATP-binding protein LcnC (715 aa).

Residues 11–138 (QVDEMDCGCA…SEWTGISLFL (128 aa)) enclose the Peptidase C39 domain. The active site involves C17. 6 helical membrane-spanning segments follow: residues 167–187 (VILN…LGSY), 197–217 (IPNA…LTYI), 237–257 (LAID…MSFF), 282–302 (TILS…ILGL), 307–327 (LFLL…IFTP), and 396–416 (AIIQ…LVIS). An ABC transmembrane type-1 domain is found at 168–450 (ILNIVIASFI…IINLQTKLQK (283 aa)). Residues 482 to 715 (LNMSDISYQY…NGFYEQLYHN (234 aa)) enclose the ABC transporter domain. ATP is bound at residue 515–522 (GMSGSGKS).

The protein belongs to the ABC transporter superfamily. Bacteriocin (lactococcin) exporter (TC 3.A.1.112.3) family.

It is found in the cell membrane. Functionally, involved in the export process of the bacteriocin lactococcin A. This Lactococcus lactis subsp. lactis (Streptococcus lactis) protein is Lactococcin-A transport/processing ATP-binding protein LcnC (lcnC).